Consider the following 497-residue polypeptide: 5'-AMP-activated protein kinase subunit gamma-3 (497 aa).

The segment at 16–143 (STQTPSWSSF…SSSSTDDLDQ (128 aa)) is disordered. Polar residues predominate over residues 39-54 (GDSTSWPSPAMTTSAE). The span at 68–79 (KSQEDVEERELP) shows a compositional bias: basic and acidic residues. CBS domains follow at residues 204 to 265 (MATS…RSPL), 287 to 345 (CFKP…QRTL), and 363 to 423 (TFRD…HLDI). Residues Arg232, 247–252 (MLTITD), Val292, 313–314 (HR), and Lys332 each bind ADP. AMP contacts are provided by residues Arg232, 247-252 (MLTITD), Val292, His313, 313-314 (HR), Lys332, Thr363, Ala368, 389-390 (SA), 405-408 (SRFD), Arg432, Leu440, His461, 461-462 (HR), and 477-480 (SLSD). ATP-binding positions include Arg232, 247-252 (MLTITD), Val292, 313-314 (HR), Arg314, and Lys332. The short motif at 300–321 (LFEAVYTLIKNRIHRLPVLDPV) is the AMPK pseudosubstrate element. Residues 405–408 (SRFD), Arg432, Leu440, and 461–462 (HR) contribute to the ADP site. Residues 405–408 (SRFD), Arg432, Leu440, and 461–462 (HR) contribute to the ATP site. Residues 435-494 (CLEGVLSCQPHETLGEVIDRIAREQVHRLVLVDETQHLLGVVSLSDILQALVLSPAGIDA) enclose the CBS 4 domain.

The protein belongs to the 5'-AMP-activated protein kinase gamma subunit family. AMPK is a heterotrimer of an alpha catalytic subunit (PRKAA1 or PRKAA2), a beta (PRKAB1 or PRKAB2) and a gamma non-catalytic subunits (PRKAG1, PRKAG2 or PRKAG3). Interacts with FNIP1 and FNIP2. Post-translationally, phosphorylated by ULK1; leading to negatively regulate AMPK activity and suggesting the existence of a regulatory feedback loop between ULK1 and AMPK. In terms of processing, glycosylated; O-GlcNAcylated by OGT, promoting the AMP-activated protein kinase (AMPK) activity.

Its function is as follows. AMP/ATP-binding subunit of AMP-activated protein kinase (AMPK), an energy sensor protein kinase that plays a key role in regulating cellular energy metabolism. In response to reduction of intracellular ATP levels, AMPK activates energy-producing pathways and inhibits energy-consuming processes: inhibits protein, carbohydrate and lipid biosynthesis, as well as cell growth and proliferation. AMPK acts via direct phosphorylation of metabolic enzymes, and by longer-term effects via phosphorylation of transcription regulators. AMPK also acts as a regulator of cellular polarity by remodeling the actin cytoskeleton; probably by indirectly activating myosin. The AMPK gamma3 subunit is a non-catalytic subunit with a regulatory role in muscle energy metabolism. It mediates binding to AMP, ADP and ATP, leading to AMPK activation or inhibition: AMP-binding results in allosteric activation of alpha catalytic subunit (PRKAA1 or PRKAA2) both by inducing phosphorylation and preventing dephosphorylation of catalytic subunits. ADP also stimulates phosphorylation, without stimulating already phosphorylated catalytic subunit. ATP promotes dephosphorylation of catalytic subunit, rendering the AMPK enzyme inactive. The polypeptide is 5'-AMP-activated protein kinase subunit gamma-3 (PRKAG3) (Bos taurus (Bovine)).